A 226-amino-acid polypeptide reads, in one-letter code: MKFKAIAKASLALGMLATGVITSNVQSVQAKAEVKQQSESELKHYYNKPILERKNVTGFKYTDEGKHYLEVTVGQQHSRITLLGSDKDKFKDGENSNIDVFILREGDSRQATNYSIGGVTKSNSVQYIDYINTPILEIKKDNEDVLKDFYYISKEDISLKELDYRLRERAIKQHGLYSNGLKQGQITITMNDGTTHTIDLSQKLEKERMGESIDGTKINKILVEMK.

A signal peptide spans 1-30 (MKFKAIAKASLALGMLATGVITSNVQSVQA).

This sequence belongs to the staphylococcal/streptococcal toxin family. In terms of assembly, homodimer.

The protein localises to the secreted. Functionally, mediates virulence by proteolytically cleaving host proteins, including collagens types I and IV as well as human cytokines IL8, IL17A, and IFN-gamma. This Staphylococcus aureus (strain NCTC 8325 / PS 47) protein is Staphylococcal superantigen-like 1.